The chain runs to 140 residues: Nucleoside diphosphate kinase (140 aa).

The ATP site is built by Lys11, Phe59, Arg87, Thr93, Arg104, and Asn114. Catalysis depends on His117, which acts as the Pros-phosphohistidine intermediate.

The protein belongs to the NDK family. In terms of assembly, homotetramer. Requires Mg(2+) as cofactor.

Its subcellular location is the cytoplasm. It carries out the reaction a 2'-deoxyribonucleoside 5'-diphosphate + ATP = a 2'-deoxyribonucleoside 5'-triphosphate + ADP. The enzyme catalyses a ribonucleoside 5'-diphosphate + ATP = a ribonucleoside 5'-triphosphate + ADP. Major role in the synthesis of nucleoside triphosphates other than ATP. The ATP gamma phosphate is transferred to the NDP beta phosphate via a ping-pong mechanism, using a phosphorylated active-site intermediate. In Francisella philomiragia subsp. philomiragia (strain ATCC 25017 / CCUG 19701 / FSC 153 / O#319-036), this protein is Nucleoside diphosphate kinase.